The primary structure comprises 127 residues: Glycine cleavage system H protein (127 aa).

Residues 22–104 (EVVIGITHFA…YEGAWMVKVE (83 aa)) enclose the Lipoyl-binding domain. Lys-63 is modified (N6-lipoyllysine).

Belongs to the GcvH family. In terms of assembly, the glycine cleavage system is composed of four proteins: P, T, L and H. It depends on (R)-lipoate as a cofactor.

Functionally, the glycine cleavage system catalyzes the degradation of glycine. The H protein shuttles the methylamine group of glycine from the P protein to the T protein. Its function is as follows. Is also involved in protein lipoylation via its role as an octanoyl/lipoyl carrier protein intermediate. The sequence is that of Glycine cleavage system H protein from Bacillus cereus (strain G9842).